We begin with the raw amino-acid sequence, 174 residues long: Peptide deformylase (174 aa).

2 residues coordinate Fe cation: cysteine 91 and histidine 133. Glutamate 134 is a catalytic residue. Fe cation is bound at residue histidine 137.

It belongs to the polypeptide deformylase family. Fe(2+) serves as cofactor.

The enzyme catalyses N-terminal N-formyl-L-methionyl-[peptide] + H2O = N-terminal L-methionyl-[peptide] + formate. Its function is as follows. Removes the formyl group from the N-terminal Met of newly synthesized proteins. Requires at least a dipeptide for an efficient rate of reaction. N-terminal L-methionine is a prerequisite for activity but the enzyme has broad specificity at other positions. The polypeptide is Peptide deformylase (Fusobacterium nucleatum subsp. nucleatum (strain ATCC 25586 / DSM 15643 / BCRC 10681 / CIP 101130 / JCM 8532 / KCTC 2640 / LMG 13131 / VPI 4355)).